We begin with the raw amino-acid sequence, 135 residues long: Small ribosomal subunit protein uS8 (135 aa).

This sequence belongs to the universal ribosomal protein uS8 family. In terms of assembly, part of the 30S ribosomal subunit. Contacts proteins S5 and S12.

Its function is as follows. One of the primary rRNA binding proteins, it binds directly to 16S rRNA central domain where it helps coordinate assembly of the platform of the 30S subunit. The polypeptide is Small ribosomal subunit protein uS8 (Corynebacterium urealyticum (strain ATCC 43042 / DSM 7109)).